Here is a 166-residue protein sequence, read N- to C-terminus: NAD(P)H-quinone oxidoreductase subunit I, chloroplastic (166 aa).

4Fe-4S ferredoxin-type domains lie at 55–84 and 95–124; these read GRIH…VDWK and LNYS…MTEE. Residues C64, C67, C70, C74, C104, C107, C110, and C114 each contribute to the [4Fe-4S] cluster site.

It belongs to the complex I 23 kDa subunit family. NDH is composed of at least 16 different subunits, 5 of which are encoded in the nucleus. The cofactor is [4Fe-4S] cluster.

The protein resides in the plastid. The protein localises to the chloroplast thylakoid membrane. The catalysed reaction is a plastoquinone + NADH + (n+1) H(+)(in) = a plastoquinol + NAD(+) + n H(+)(out). It catalyses the reaction a plastoquinone + NADPH + (n+1) H(+)(in) = a plastoquinol + NADP(+) + n H(+)(out). Its function is as follows. NDH shuttles electrons from NAD(P)H:plastoquinone, via FMN and iron-sulfur (Fe-S) centers, to quinones in the photosynthetic chain and possibly in a chloroplast respiratory chain. The immediate electron acceptor for the enzyme in this species is believed to be plastoquinone. Couples the redox reaction to proton translocation, and thus conserves the redox energy in a proton gradient. This chain is NAD(P)H-quinone oxidoreductase subunit I, chloroplastic, found in Pericome caudata (Mountain tail-leaf).